The primary structure comprises 185 residues: Prenylated Rab acceptor protein 1 (185 aa).

Residues 1–78 (MAAQKDQQKD…RNVEYYQSNY (78 aa)) lie on the Cytoplasmic side of the membrane. The required for interaction with prenylated RAB3A and VAMP2 stretch occupies residues 30–54 (AGREWLERRRATIRPWSTFVDQQRF). The next 2 membrane-spanning stretches (helical) occupy residues 79 to 94 (VFVF…VTSP) and 95 to 112 (MLLV…ILYL). The Cytoplasmic portion of the chain corresponds to 113–131 (RTLESKLVLFGREVSPAHQ). Transmembrane regions (helical) follow at residues 132 to 148 (YALA…LAGA) and 149 to 165 (GSAV…VIGS). Residues 165–185 (SHAAFHQIEAVDGEELQMEPV) form a required for interaction with GDI1 region. Topologically, residues 166–185 (HAAFHQIEAVDGEELQMEPV) are cytoplasmic. Residues 175 to 185 (VDGEELQMEPV) form a required for interaction with prenylated RAB3A and VAMP2 region. The tract at residues 175-185 (VDGEELQMEPV) is homodimerization.

The protein belongs to the PRA1 family. As to quaternary structure, homodimer. Interacts with VAMP2 (synaptobrevin-2), GDI1, and PCLO. Interacts specifically with prenylated Rab proteins; strongly with RAB4B, RAB5A and RAB5C, and weakly with RAB4A, RAB6, RAB7A, RAB17 and RAB22. Interacts with NDRG1. Ubiquitous. Strongest expression found in placenta, pituitary gland, kidney, lung and stomach.

The protein localises to the cell membrane. The protein resides in the cytoplasm. Its subcellular location is the golgi apparatus. It is found in the cytoplasmic vesicle. It localises to the secretory vesicle. The protein localises to the synaptic vesicle. In terms of biological role, general Rab protein regulator required for vesicle formation from the Golgi complex. May control vesicle docking and fusion by mediating the action of Rab GTPases to the SNARE complexes. In addition it inhibits the removal of Rab GTPases from the membrane by GDI. This Homo sapiens (Human) protein is Prenylated Rab acceptor protein 1 (RABAC1).